The chain runs to 634 residues: DNA-directed RNA polymerase subunit gamma (634 aa).

The Zn(2+) site is built by cysteine 74, cysteine 76, cysteine 89, and cysteine 92. Residues aspartate 471, aspartate 473, and aspartate 475 each coordinate Mg(2+).

Belongs to the RNA polymerase beta' chain family. RpoC1 subfamily. In terms of assembly, in cyanobacteria the RNAP catalytic core is composed of 2 alpha, 1 beta, 1 beta', 1 gamma and 1 omega subunit. When a sigma factor is associated with the core the holoenzyme is formed, which can initiate transcription. Mg(2+) serves as cofactor. The cofactor is Zn(2+).

It catalyses the reaction RNA(n) + a ribonucleoside 5'-triphosphate = RNA(n+1) + diphosphate. Its function is as follows. DNA-dependent RNA polymerase catalyzes the transcription of DNA into RNA using the four ribonucleoside triphosphates as substrates. In Prochlorococcus marinus (strain SARG / CCMP1375 / SS120), this protein is DNA-directed RNA polymerase subunit gamma.